The primary structure comprises 463 residues: Glutamate--tRNA ligase 1 (463 aa).

The 'HIGH' region signature appears at 10–20 (PSPTGFLHIGS). A 'KMSKS' region motif is present at residues 239 to 243 (KLSKR). ATP is bound at residue Lys-242.

This sequence belongs to the class-I aminoacyl-tRNA synthetase family. Glutamate--tRNA ligase type 1 subfamily. Monomer.

It is found in the cytoplasm. It catalyses the reaction tRNA(Glu) + L-glutamate + ATP = L-glutamyl-tRNA(Glu) + AMP + diphosphate. Functionally, catalyzes the attachment of glutamate to tRNA(Glu) in a two-step reaction: glutamate is first activated by ATP to form Glu-AMP and then transferred to the acceptor end of tRNA(Glu). This chain is Glutamate--tRNA ligase 1, found in Rickettsia canadensis (strain McKiel).